The primary structure comprises 236 residues: Sorulation-regulated protein 2 (236 aa).

A signal peptide spans 1–20 (MLGLYLSSLFFAFFMAQVFA). 4 N-linked (GlcNAc...) asparagine glycosylation sites follow: Asn155, Asn160, Asn203, and Asn212. Asn212 carries the GPI-anchor amidated asparagine lipid modification. A propeptide spans 213 to 236 (SSSSLMPSMGILSFLFGLYLLLHP) (removed in mature form).

In terms of processing, the GPI-anchor is attached to the protein in the endoplasmic reticulum and serves to target the protein to the cell surface. There, the glucosamine-inositol phospholipid moiety is cleaved off and the GPI-modified mannoprotein is covalently attached via its lipidless GPI glycan remnant to the 1,6-beta-glucan of the outer cell wall layer. N-glycosylated.

It localises to the spore wall. Its subcellular location is the secreted. It is found in the cell wall. The protein resides in the membrane. In Saccharomyces cerevisiae (strain ATCC 204508 / S288c) (Baker's yeast), this protein is Sorulation-regulated protein 2.